The primary structure comprises 387 residues: Bifunctional chorismate mutase/prephenate dehydratase (387 aa).

The 92-residue stretch at 1 to 92 folds into the Chorismate mutase domain; it reads MNPDNPLLAL…DSVLTQQALL (92 aa). Substrate-binding residues include Arg-11, Arg-28, Lys-39, Asp-48, Glu-52, Ser-84, and Gln-88. Positions 105–285 constitute a Prephenate dehydratase domain; that stretch reads RIAFLGPKGS…NHTRFIVLAR (181 aa). Residues 299-376 form the ACT domain; the sequence is TLIMATGQQA…RSLKVLGCYP (78 aa).

It localises to the cytoplasm. The catalysed reaction is chorismate = prephenate. The enzyme catalyses prephenate + H(+) = 3-phenylpyruvate + CO2 + H2O. It participates in amino-acid biosynthesis; L-phenylalanine biosynthesis; phenylpyruvate from prephenate: step 1/1. Its pathway is metabolic intermediate biosynthesis; prephenate biosynthesis; prephenate from chorismate: step 1/1. In terms of biological role, catalyzes the Claisen rearrangement of chorismate to prephenate and the decarboxylation/dehydration of prephenate to phenylpyruvate. The polypeptide is Bifunctional chorismate mutase/prephenate dehydratase (pheA) (Enterobacter agglomerans (Erwinia herbicola)).